Here is a 433-residue protein sequence, read N- to C-terminus: Serine--tRNA ligase (433 aa).

236-238 (TAE) serves as a coordination point for L-serine. ATP is bound at residue 267–269 (RSE). Glutamate 290 is an L-serine binding site. 354 to 357 (EISS) lines the ATP pocket. Serine 394 provides a ligand contact to L-serine.

Belongs to the class-II aminoacyl-tRNA synthetase family. Type-1 seryl-tRNA synthetase subfamily. Homodimer. The tRNA molecule binds across the dimer.

Its subcellular location is the cytoplasm. It catalyses the reaction tRNA(Ser) + L-serine + ATP = L-seryl-tRNA(Ser) + AMP + diphosphate + H(+). It carries out the reaction tRNA(Sec) + L-serine + ATP = L-seryl-tRNA(Sec) + AMP + diphosphate + H(+). Its pathway is aminoacyl-tRNA biosynthesis; selenocysteinyl-tRNA(Sec) biosynthesis; L-seryl-tRNA(Sec) from L-serine and tRNA(Sec): step 1/1. Its function is as follows. Catalyzes the attachment of serine to tRNA(Ser). Is also able to aminoacylate tRNA(Sec) with serine, to form the misacylated tRNA L-seryl-tRNA(Sec), which will be further converted into selenocysteinyl-tRNA(Sec). In Acidiphilium cryptum (strain JF-5), this protein is Serine--tRNA ligase.